The primary structure comprises 427 residues: 3-phosphoshikimate 1-carboxyvinyltransferase (427 aa).

3-phosphoshikimate-binding residues include Lys-22, Ser-23, and Arg-27. Lys-22 provides a ligand contact to phosphoenolpyruvate. Phosphoenolpyruvate contacts are provided by Gly-96 and Arg-124. Positions 169, 170, 171, 197, 313, 336, and 340 each coordinate 3-phosphoshikimate. Gln-171 lines the phosphoenolpyruvate pocket. Residue Asp-313 is the Proton acceptor of the active site. The phosphoenolpyruvate site is built by Arg-344, Arg-386, and Lys-411.

It belongs to the EPSP synthase family. In terms of assembly, monomer.

It localises to the cytoplasm. It carries out the reaction 3-phosphoshikimate + phosphoenolpyruvate = 5-O-(1-carboxyvinyl)-3-phosphoshikimate + phosphate. The protein operates within metabolic intermediate biosynthesis; chorismate biosynthesis; chorismate from D-erythrose 4-phosphate and phosphoenolpyruvate: step 6/7. In terms of biological role, catalyzes the transfer of the enolpyruvyl moiety of phosphoenolpyruvate (PEP) to the 5-hydroxyl of shikimate-3-phosphate (S3P) to produce enolpyruvyl shikimate-3-phosphate and inorganic phosphate. This Escherichia coli O6:H1 (strain CFT073 / ATCC 700928 / UPEC) protein is 3-phosphoshikimate 1-carboxyvinyltransferase.